Consider the following 257-residue polypeptide: Glucose-1-phosphate cytidylyltransferase (257 aa).

Residues 6 to 10 (LAGGL), 11 to 13 (GTR), Lys23, Ser104, Arg109, and Gly128 contribute to the substrate site. Asp129 and Asp234 together coordinate Mg(2+).

The protein belongs to the glucose-1-phosphate cytidylyltransferase family. Homohexamer. The cofactor is Mg(2+).

The catalysed reaction is alpha-D-glucose 1-phosphate + CTP + H(+) = CDP-D-glucose + diphosphate. Its pathway is nucleotide-sugar biosynthesis; CDP-3,6-dideoxy-D-mannose biosynthesis; CDP-3,6-dideoxy-D-mannose from CTP and alpha-D-glucose 1-phosphate: step 1/5. It functions in the pathway bacterial outer membrane biogenesis; LPS O-antigen biosynthesis. In terms of biological role, involved in the biosynthesis of the tyvelose, a 3,6-dideoxyhexose found in the O-antigen of the surface lipopolysaccharides. It catalyzes the transfer of a CMP moiety from CTP to glucose 1-phosphate. This enzyme can utilize either CTP or UTP as the nucleotide donor. The sequence is that of Glucose-1-phosphate cytidylyltransferase (rfbF) from Salmonella typhi.